We begin with the raw amino-acid sequence, 328 residues long: Peroxidase 63 (328 aa).

Positions 1-27 (MAEQSQLKNLTIILLLLCLSFQSLSFA) are cleaved as a signal peptide. Disulfide bonds link Cys41–Cys122, Cys74–Cys79, Cys128–Cys324, and Cys207–Cys234. His72 serves as the catalytic Proton acceptor. Ca(2+) contacts are provided by Asp73, Gly78, Asp80, and Ser82. Pro170 is a substrate binding site. His200 contacts heme b. Position 201 (Thr201) interacts with Ca(2+). Residues Asn217 and Asn218 are each glycosylated (N-linked (GlcNAc...) asparagine). Positions 248, 251, and 256 each coordinate Ca(2+).

The protein belongs to the peroxidase family. Classical plant (class III) peroxidase subfamily. Heme b serves as cofactor. The cofactor is Ca(2+).

The protein localises to the secreted. The catalysed reaction is 2 a phenolic donor + H2O2 = 2 a phenolic radical donor + 2 H2O. In terms of biological role, removal of H(2)O(2), oxidation of toxic reductants, biosynthesis and degradation of lignin, suberization, auxin catabolism, response to environmental stresses such as wounding, pathogen attack and oxidative stress. These functions might be dependent on each isozyme/isoform in each plant tissue. The chain is Peroxidase 63 (PER63) from Arabidopsis thaliana (Mouse-ear cress).